The primary structure comprises 321 residues: Acetyl-coenzyme A carboxylase carboxyl transferase subunit alpha (321 aa).

Positions 37–298 (DLDDEIKRLQ…KQRILSDLED (262 aa)) constitute a CoA carboxyltransferase C-terminal domain.

This sequence belongs to the AccA family. In terms of assembly, acetyl-CoA carboxylase is a heterohexamer composed of biotin carboxyl carrier protein (AccB), biotin carboxylase (AccC) and two subunits each of ACCase subunit alpha (AccA) and ACCase subunit beta (AccD).

It localises to the cytoplasm. It catalyses the reaction N(6)-carboxybiotinyl-L-lysyl-[protein] + acetyl-CoA = N(6)-biotinyl-L-lysyl-[protein] + malonyl-CoA. It functions in the pathway lipid metabolism; malonyl-CoA biosynthesis; malonyl-CoA from acetyl-CoA: step 1/1. Its function is as follows. Component of the acetyl coenzyme A carboxylase (ACC) complex. First, biotin carboxylase catalyzes the carboxylation of biotin on its carrier protein (BCCP) and then the CO(2) group is transferred by the carboxyltransferase to acetyl-CoA to form malonyl-CoA. This chain is Acetyl-coenzyme A carboxylase carboxyl transferase subunit alpha, found in Mannheimia succiniciproducens (strain KCTC 0769BP / MBEL55E).